A 236-amino-acid polypeptide reads, in one-letter code: Small ribosomal subunit protein uS5 (236 aa).

Residues 61–124 enclose the S5 DRBM domain; it reads ENQEVLDIAL…NYAKLNIIEI (64 aa).

This sequence belongs to the universal ribosomal protein uS5 family. In terms of assembly, part of the 30S ribosomal subunit. Contacts protein S4.

Its function is as follows. With S4 and S12 plays an important role in translational accuracy. The sequence is that of Small ribosomal subunit protein uS5 from Pyrococcus furiosus (strain ATCC 43587 / DSM 3638 / JCM 8422 / Vc1).